A 715-amino-acid chain; its full sequence is Targeting protein for Xklp2-B (715 aa).

Residues 36 to 167 (NAENIPPDQK…LTMPATPTVL (132 aa)) form a disordered region. Residues 47–56 (LSETSVNAEQ) are compositionally biased toward polar residues. A compositionally biased stretch (basic residues) spans 85–103 (QTKRSARRMSKKHRQKILL). The span at 104–115 (KMKETHLEKETA) shows a compositional bias: basic and acidic residues. Over residues 141 to 152 (QPTSSHHGTTSP) the composition is skewed to polar residues. S204 carries the phosphoserine; by plk1 modification. 2 disordered regions span residues 260-291 (PPTS…EEAS) and 314-337 (RSRQ…TNPK).

It belongs to the TPX2 family. In terms of assembly, associates with microtubules. Interacts with aurka and plk1. Interacts with kif15. Post-translationally, phosphorylated during mitosis. Hyperphosphorylated upon assembly of microtubules.

The protein resides in the nucleus. It localises to the cytoplasm. It is found in the cytoskeleton. Its subcellular location is the spindle. The protein localises to the spindle pole. Its function is as follows. Spindle assembly factor. Required for normal assembly of mitotic spindles. Mediates the binding kif15 and aurka to spindle microtubules. Required for targeting kif15 to microtubule minus ends. Activates aurka by promoting its autophosphorylation and protects the phosphorylated residue against dephosphorylation. The polypeptide is Targeting protein for Xklp2-B (tpx2-b) (Xenopus laevis (African clawed frog)).